A 400-amino-acid chain; its full sequence is Argininosuccinate synthase (400 aa).

Residues 10–18 (AYSGGVDTS) and Ala-38 contribute to the ATP site. Residue Tyr-89 participates in L-citrulline binding. Gly-119 is a binding site for ATP. L-aspartate-binding residues include Thr-121, Asn-125, and Asp-126. Asn-125 is an L-citrulline binding site. Positions 129, 177, 186, 262, and 274 each coordinate L-citrulline.

Belongs to the argininosuccinate synthase family. Type 1 subfamily. As to quaternary structure, homotetramer.

It is found in the cytoplasm. It carries out the reaction L-citrulline + L-aspartate + ATP = 2-(N(omega)-L-arginino)succinate + AMP + diphosphate + H(+). The protein operates within amino-acid biosynthesis; L-arginine biosynthesis; L-arginine from L-ornithine and carbamoyl phosphate: step 2/3. The chain is Argininosuccinate synthase from Nostoc punctiforme (strain ATCC 29133 / PCC 73102).